Consider the following 518-residue polypeptide: Serine hydroxymethyltransferase, mitochondrial (518 aa).

The N-terminal 31 residues, 1 to 31 (MAMAMALRKLSSSVNKSSRPLFSASSLYYKS), are a transit peptide targeting the mitochondrion. Position 287 is an N6-(pyridoxal phosphate)lysine (Lys287).

The protein belongs to the SHMT family. In terms of assembly, homotetramer. Pyridoxal 5'-phosphate is required as a cofactor.

It localises to the mitochondrion. The enzyme catalyses (6R)-5,10-methylene-5,6,7,8-tetrahydrofolate + glycine + H2O = (6S)-5,6,7,8-tetrahydrofolate + L-serine. It functions in the pathway one-carbon metabolism; tetrahydrofolate interconversion. Functionally, catalyzes the interconversion of serine and glycine. In Pisum sativum (Garden pea), this protein is Serine hydroxymethyltransferase, mitochondrial.